The following is a 491-amino-acid chain: Nicotinamide phosphoribosyltransferase (491 aa).

Residue Met1 is modified to N-acetylmethionine. Residue Tyr188 is modified to Phosphotyrosine. Residue Arg196 participates in diphosphate binding. Asp219 is a beta-nicotinamide D-ribonucleotide binding site. Diphosphate-binding residues include His247 and Arg311. Beta-nicotinamide D-ribonucleotide is bound by residues 311–313, 353–354, Gly384, and Arg392; these read RPD and GD. At Ser472 the chain carries Phosphoserine.

This sequence belongs to the NAPRTase family. In terms of assembly, homodimer.

The protein resides in the nucleus. Its subcellular location is the cytoplasm. It localises to the secreted. The enzyme catalyses beta-nicotinamide D-ribonucleotide + diphosphate = 5-phospho-alpha-D-ribose 1-diphosphate + nicotinamide + H(+). The protein operates within cofactor biosynthesis; NAD(+) biosynthesis; nicotinamide D-ribonucleotide from 5-phospho-alpha-D-ribose 1-diphosphate and nicotinamide: step 1/1. In terms of biological role, catalyzes the condensation of nicotinamide with 5-phosphoribosyl-1-pyrophosphate to yield nicotinamide mononucleotide, an intermediate in the biosynthesis of NAD. It is the rate limiting component in the mammalian NAD biosynthesis pathway. The secreted form behaves both as a cytokine with immunomodulating properties and an adipokine with anti-diabetic properties, it has no enzymatic activity, partly because of lack of activation by ATP, which has a low level in extracellular space and plasma. Plays a role in the modulation of circadian clock function. Plays a role in the modulation of circadian clock function. NAMPT-dependent oscillatory production of NAD regulates oscillation of clock target gene expression by releasing the core clock component: CLOCK-BMAL1 heterodimer from NAD-dependent SIRT1-mediated suppression. This chain is Nicotinamide phosphoribosyltransferase (NAMPT), found in Sus scrofa (Pig).